Consider the following 225-residue polypeptide: MTVCSRRNFVSGMGAVILMTGTSLPAFAKENKADKPKRYAMIHDENACIGCTACMDSCRDVNQVPEGVSRLEILRSEPYGEFPNQEYEFFRQSCQHCTNAPCVAVCPTGASFIDKETGIVDVHKDLCIGCQYCIAVCPYRVRFIHPIHRTADKCNFCRDTNLANGKQPACVEACPTKALTFGDMNDPTSAVSRKVKEKPVYRTKVELGTQPNLYHIPFQHGEPRR.

The segment at residues 1–28 is a signal peptide (tat-type signal); it reads MTVCSRRNFVSGMGAVILMTGTSLPAFA. 4Fe-4S ferredoxin-type domains follow at residues 39–67, 85–116, and 118–147; these read YAMI…VPEG, QEYE…IDKE, and GIVD…IHPI. Residues cysteine 48, cysteine 51, cysteine 54, cysteine 58, cysteine 94, cysteine 97, cysteine 102, cysteine 106, cysteine 127, cysteine 130, cysteine 133, cysteine 137, cysteine 154, cysteine 157, cysteine 170, and cysteine 174 each contribute to the [4Fe-4S] cluster site.

Post-translationally, predicted to be exported by the Tat system. The position of the signal peptide cleavage has not been experimentally proven.

Its function is as follows. Probably involved in the transfer of electrons from the quinone pool to the type-c cytochromes. This chain is Protein NrfC homolog (nrfC), found in Haemophilus influenzae (strain ATCC 51907 / DSM 11121 / KW20 / Rd).